The primary structure comprises 414 residues: Dimethylsulfoniopropionate lyase DddY (414 aa).

Residues 1 to 18 (MKYMVLFSGLLFSNVLVA) form the signal peptide.

It belongs to the DMSP lyase DddY family.

The protein resides in the periplasm. It carries out the reaction S,S-dimethyl-beta-propiothetin = acrylate + dimethyl sulfide + H(+). Functionally, catalyzes the cleavage of dimethylsulfoniopropionate (DMSP) into dimethyl sulfide (DMS) and acrylate. This chain is Dimethylsulfoniopropionate lyase DddY, found in Shewanella woodyi (strain ATCC 51908 / MS32).